The primary structure comprises 348 residues: Protein-glutamate methylesterase/protein-glutamine glutaminase 2 (348 aa).

One can recognise a Response regulatory domain in the interval 5 to 122; it reads KVLIIDDSAL…DLGLSQYRDE (118 aa). D56 carries the post-translational modification 4-aspartylphosphate. The CheB-type methylesterase domain maps to 157-348; sequence SLKTGFLCAI…AANIIKHALK (192 aa). Residues S169, H195, and D291 contribute to the active site.

It belongs to the CheB family. In terms of processing, phosphorylated by CheA. Phosphorylation of the N-terminal regulatory domain activates the methylesterase activity.

It is found in the cytoplasm. The enzyme catalyses [protein]-L-glutamate 5-O-methyl ester + H2O = L-glutamyl-[protein] + methanol + H(+). The catalysed reaction is L-glutaminyl-[protein] + H2O = L-glutamyl-[protein] + NH4(+). Its function is as follows. Involved in chemotaxis. Part of a chemotaxis signal transduction system that modulates chemotaxis in response to various stimuli. Catalyzes the demethylation of specific methylglutamate residues introduced into the chemoreceptors (methyl-accepting chemotaxis proteins or MCP) by CheR. Also mediates the irreversible deamidation of specific glutamine residues to glutamic acid. This is Protein-glutamate methylesterase/protein-glutamine glutaminase 2 from Saccharophagus degradans (strain 2-40 / ATCC 43961 / DSM 17024).